Here is a 316-residue protein sequence, read N- to C-terminus: Myb-related protein 306 (316 aa).

HTH myb-type domains are found at residues 9–65 (KIGV…RPGI) and 66–116 (KRGD…KKKL). 2 DNA-binding regions (H-T-H motif) span residues 37–61 (WRAI…TNYL) and 89–112 (WAAI…NTHL). Disordered stretches follow at residues 119–144 (LQSP…SKGQ), 168–193 (KTSS…QAST), and 209–230 (KKSP…TTTS). Residues 135–144 (DSDKSVSKGQ) show a composition bias toward basic and acidic residues. A compositionally biased stretch (polar residues) spans 181–193 (VQTTQPRPFQAST). Over residues 216-230 (SSTSQAGSSESTTTS) the composition is skewed to low complexity.

Expressed in flowers, leaves and weakly in seed pods.

The protein resides in the nucleus. In terms of biological role, transcription factor. In Antirrhinum majus (Garden snapdragon), this protein is Myb-related protein 306.